Here is a 943-residue protein sequence, read N- to C-terminus: Isoleucine--tRNA ligase (943 aa).

The 'HIGH' region motif lies at 59–69; the sequence is PYANGQIHLGH. Position 577 (glutamate 577) interacts with L-isoleucyl-5'-AMP. The short motif at 618–622 is the 'KMSKS' region element; sequence KMSKS. Lysine 621 contributes to the ATP binding site. Zn(2+) contacts are provided by cysteine 906, cysteine 909, cysteine 926, and cysteine 929.

This sequence belongs to the class-I aminoacyl-tRNA synthetase family. IleS type 1 subfamily. Monomer. Zn(2+) is required as a cofactor.

The protein localises to the cytoplasm. It catalyses the reaction tRNA(Ile) + L-isoleucine + ATP = L-isoleucyl-tRNA(Ile) + AMP + diphosphate. Catalyzes the attachment of isoleucine to tRNA(Ile). As IleRS can inadvertently accommodate and process structurally similar amino acids such as valine, to avoid such errors it has two additional distinct tRNA(Ile)-dependent editing activities. One activity is designated as 'pretransfer' editing and involves the hydrolysis of activated Val-AMP. The other activity is designated 'posttransfer' editing and involves deacylation of mischarged Val-tRNA(Ile). This Xanthomonas oryzae pv. oryzae (strain MAFF 311018) protein is Isoleucine--tRNA ligase.